A 956-amino-acid chain; its full sequence is Bromodomain testis-specific protein (956 aa).

In terms of domain architecture, Bromo 1 spans 26–132; sequence RLTNQLQFLQ…KLFMQKLSQM (107 aa). Ser186 bears the Phosphoserine mark. A Nuclear localization signal motif is present at residues 208 to 219; the sequence is KGVKRRADTTTP. Residues 210–239 are disordered; the sequence is VKRRADTTTPTTSIAKASSESPPTLRETKP. Residues 216 to 231 show a composition bias toward polar residues; the sequence is TTTPTTSIAKASSESP. In terms of domain architecture, Bromo 2 spans 266–375; it reads VKVTEQLKHC…DVFELHFAKI (110 aa). Disordered regions lie at residues 391 to 420, 442 to 508, 607 to 747, and 859 to 934; these read NSAQALSRESSSEASSGDASSEDSEDERVQ, VPLR…PMNY, NQLN…HSQQ, and LEHN…RREA. A compositionally biased stretch (low complexity) spans 392 to 409; it reads SAQALSRESSSEASSGDA. The stretch at 417-442 forms a coiled coil; the sequence is ERVQHLAKLQEQLNAVHQQLQVLSQV. Residues 445 to 463 are compositionally biased toward basic residues; that stretch reads RKLKKKNEKSKRAPKRKKV. The NET domain occupies 496–578; the sequence is KSEEEDNAKP…ACLRKRSLKP (83 aa). The segment covering 625–640 has biased composition (pro residues); that stretch reads PPPPPPPPPPPPPPPE. Residues 649 to 688 are compositionally biased toward low complexity; that stretch reads DSSSSSGSGSGSSSSSSGSSSSSSSSGSASSSSDSSSSDS. The segment covering 714 to 724 has biased composition (polar residues); that stretch reads KQIQSSVQDIT. Positions 844–940 form a coiled coil; sequence EKEVKARTQE…RREAMAGTID (97 aa). Basic and acidic residues-rich tracts occupy residues 859 to 874 and 915 to 934; these read LEHNAKDPKVSQENQR and LLKDRNLAREKEQERRRREA.

It belongs to the BET family. As to quaternary structure, interacts with SMARCE1. Interacts with mRNA splicing machinery proteins SRSF2, DDX5, HNRNPK and TARDBP. Interacts with the acetylated N-terminus of histone H1, H2, H3 and H4. Interacts with P-TEFb components CDK9 and CCNT1/cyclin-T1. In terms of processing, ubiquitinated in a SPOP-dependent manner, leading to proteasomal degradation. In terms of tissue distribution, testis-specific. Expressed in germinal cells from the early meiotic (pachytene) spermatocytes and during spermiogenesis in the round and elongating spermatids until the condensed late spermatids. No expression seen in spermatogonia.

It localises to the nucleus. Functionally, testis-specific chromatin protein that specifically binds histone H4 acetylated at 'Lys-5' and 'Lys-8' (H4K5ac and H4K8ac, respectively) and plays a key role in spermatogenesis. Required in late pachytene spermatocytes: plays a role in meiotic and post-meiotic cells by binding to acetylated histones at the promoter of specific meiotic and post-meiotic genes, facilitating their activation at the appropriate time. In the post-meiotic phase of spermatogenesis, binds to hyperacetylated histones and participates in their general removal from DNA. Also recognizes and binds a subset of butyrylated histones: able to bind histone H4 butyrylated at 'Lys-8' (H4K8ac), while it is not able to bind H4 butyrylated at 'Lys-5' (H4K5ac). Also acts as a component of the splicing machinery in pachytene spermatocytes and round spermatids and participates in 3'-UTR truncation of specific mRNAs in post-meiotic spermatids. Required for chromocenter organization, a structure comprised of peri-centromeric heterochromatin. This chain is Bromodomain testis-specific protein (Brdt), found in Mus musculus (Mouse).